A 709-amino-acid polypeptide reads, in one-letter code: Kelch domain-containing protein STK_09390 (709 aa).

An N-terminal signal peptide occupies residues M1 to A22. Kelch repeat units lie at residues K49 to N94, L96 to Y140, K141 to S192, A193 to G240, M242 to G288, and K290 to A340. Fibronectin type-III domains are found at residues P315–P405, P406–A488, N489–I566, and P568–R643.

This Sulfurisphaera tokodaii (strain DSM 16993 / JCM 10545 / NBRC 100140 / 7) (Sulfolobus tokodaii) protein is Kelch domain-containing protein STK_09390.